Reading from the N-terminus, the 145-residue chain is D-aminoacyl-tRNA deacylase (145 aa).

The Gly-cisPro motif, important for rejection of L-amino acids signature appears at glycine 137–proline 138.

The protein belongs to the DTD family. In terms of assembly, homodimer.

Its subcellular location is the cytoplasm. The catalysed reaction is glycyl-tRNA(Ala) + H2O = tRNA(Ala) + glycine + H(+). The enzyme catalyses a D-aminoacyl-tRNA + H2O = a tRNA + a D-alpha-amino acid + H(+). In terms of biological role, an aminoacyl-tRNA editing enzyme that deacylates mischarged D-aminoacyl-tRNAs. Also deacylates mischarged glycyl-tRNA(Ala), protecting cells against glycine mischarging by AlaRS. Acts via tRNA-based rather than protein-based catalysis; rejects L-amino acids rather than detecting D-amino acids in the active site. By recycling D-aminoacyl-tRNA to D-amino acids and free tRNA molecules, this enzyme counteracts the toxicity associated with the formation of D-aminoacyl-tRNA entities in vivo and helps enforce protein L-homochirality. The polypeptide is D-aminoacyl-tRNA deacylase (Saccharophagus degradans (strain 2-40 / ATCC 43961 / DSM 17024)).